Here is a 677-residue protein sequence, read N- to C-terminus: UvrABC system protein B (677 aa).

The 389-residue stretch at 24-412 (EGVLQGVPAQ…EGIVVEQVIR (389 aa)) folds into the Helicase ATP-binding domain. 37-44 (GVTGSGKT) is an ATP binding site. The short motif at 90 to 113 (YYDYYQPEAYLPNSDTYIEKDLAI) is the Beta-hairpin element. The 163-residue stretch at 429–591 (QIDDLMEEIQ…ITPQQIKKAR (163 aa)) folds into the Helicase C-terminal domain. One can recognise a UVR domain in the interval 636-671 (EKSIERTRKLMQEAAKKLEFIEAAQYRNELLKLEDL).

The protein belongs to the UvrB family. Forms a heterotetramer with UvrA during the search for lesions. Interacts with UvrC in an incision complex.

It localises to the cytoplasm. The UvrABC repair system catalyzes the recognition and processing of DNA lesions. A damage recognition complex composed of 2 UvrA and 2 UvrB subunits scans DNA for abnormalities. Upon binding of the UvrA(2)B(2) complex to a putative damaged site, the DNA wraps around one UvrB monomer. DNA wrap is dependent on ATP binding by UvrB and probably causes local melting of the DNA helix, facilitating insertion of UvrB beta-hairpin between the DNA strands. Then UvrB probes one DNA strand for the presence of a lesion. If a lesion is found the UvrA subunits dissociate and the UvrB-DNA preincision complex is formed. This complex is subsequently bound by UvrC and the second UvrB is released. If no lesion is found, the DNA wraps around the other UvrB subunit that will check the other stand for damage. This is UvrABC system protein B from Bacteroides thetaiotaomicron (strain ATCC 29148 / DSM 2079 / JCM 5827 / CCUG 10774 / NCTC 10582 / VPI-5482 / E50).